The following is a 97-amino-acid chain: Antitoxin TacA2 (97 aa).

This sequence belongs to the TacA antitoxin family. As to quaternary structure, homodimer. Forms a complex with cognate toxin TacT2.

Functionally, antitoxin component of a type II toxin-antitoxin (TA) system. Counteracts the toxic effect of cognate toxin TacT2. Its function is as follows. The TacA2-TacT2 complex both represses and derepresses expression of its own operon. The polypeptide is Antitoxin TacA2 (Salmonella enteritidis).